The following is a 369-amino-acid chain: Chaperone protein DnaJ (369 aa).

The J domain occupies 7-73 (DYYEILGVPR…QKRAMYDRFG (67 aa)). Residues 143 to 225 (GAEIPVEYER…CGGSGRVLRK (83 aa)) form a CR-type zinc finger. Zn(2+)-binding residues include Cys-156, Cys-159, Cys-173, Cys-176, Cys-199, Cys-202, Cys-213, and Cys-216. CXXCXGXG motif repeat units lie at residues 156-163 (CPRCGGTG), 173-180 (CPSCGGTG), 199-206 (CERCGGTG), and 213-220 (CHECGGSG).

The protein belongs to the DnaJ family. As to quaternary structure, homodimer. Zn(2+) is required as a cofactor.

The protein resides in the cytoplasm. In terms of biological role, participates actively in the response to hyperosmotic and heat shock by preventing the aggregation of stress-denatured proteins and by disaggregating proteins, also in an autonomous, DnaK-independent fashion. Unfolded proteins bind initially to DnaJ; upon interaction with the DnaJ-bound protein, DnaK hydrolyzes its bound ATP, resulting in the formation of a stable complex. GrpE releases ADP from DnaK; ATP binding to DnaK triggers the release of the substrate protein, thus completing the reaction cycle. Several rounds of ATP-dependent interactions between DnaJ, DnaK and GrpE are required for fully efficient folding. Also involved, together with DnaK and GrpE, in the DNA replication of plasmids through activation of initiation proteins. This is Chaperone protein DnaJ from Thermotoga sp. (strain RQ2).